A 332-amino-acid polypeptide reads, in one-letter code: Autoinducer 2 import system permease protein LsrD (332 aa).

The next 10 helical transmembrane spans lie at 7–27, 45–65, 70–90, 91–111, 118–138, 162–182, 216–236, 240–260, 261–281, and 288–308; these read YSWEIALAALLIFEILAFGLI, ICIGIVALPLTMVIVSGGMDI, TIGLCAITLGVLFQLGMPLPL, AIIITLLLGAICGLINAGLII, LVITLGTMYLFGGSALLLSGM, FLGIPMPLIFFLVCCLFFWLL, VYAMTGCASAIAAVLLVSYFG, SDLGASFLMPAITAVVLGGAN, IYGGSGSIMGSALAALLVGFL, and AGVPNQISSALSGALLIVVVV.

Belongs to the binding-protein-dependent transport system permease family. AraH/RbsC subfamily. The complex is composed of two ATP-binding proteins (LsrA), two transmembrane proteins (LsrC and LsrD) and a solute-binding protein (LsrB).

The protein localises to the cell inner membrane. Part of the ABC transporter complex LsrABCD involved in autoinducer 2 (AI-2) import. Probably responsible for the translocation of the substrate across the membrane. This Salmonella paratyphi B (strain ATCC BAA-1250 / SPB7) protein is Autoinducer 2 import system permease protein LsrD (lsrD).